Consider the following 101-residue polypeptide: uncharacterized protein (101 aa).

Residues 72 to 94 (ILCPSFLNYSFINIYCFGPYTMV) traverse the membrane as a helical segment.

The protein resides in the membrane. This is an uncharacterized protein from Schizosaccharomyces pombe (strain 972 / ATCC 24843) (Fission yeast).